The sequence spans 450 residues: MRRLRFSPRSSFARTLLLIVTLLFASLVTTYLVVLNFAILPSLQQFNKVLAYEVRMLMTDKLQLEDGTQLVVPPAFRREIYRELGISLYSNEAAEEAGLRWAQHYEFLSHQMAQQLGGPTEVRVEVNKSSPVVWLKTWLSPNIWVRVPLTEIHQGDFSPLFRYTLAIMLLAIGGAWLFIRIQNRPLVDLEHAALQVGKGIIPPPLREYGASEVRSVTRAFNHMAAGVKQLADDRTLLMAGVSHDLRTPLTRIRLATEMMSEQDGYLAESINKDIEECNAIIEQFIDYLRTGQEMPMEMADLNAVLGEVIAAESGYEREIETALYPGSIEVKMHPLSIKRAVANMVVNAARYGNGWIKVSSGTEPNRAWFQVEDDGPGIAPEQRKHLFQPFVRGDSARTISGTGLGLAIVQRIVDNHNGMLELGTSERGGLSIRAWLPVPVTRAQGTTKEG.

Over 1–15 the chain is Cytoplasmic; it reads MRRLRFSPRSSFART. A helical membrane pass occupies residues 16 to 35; the sequence is LLLIVTLLFASLVTTYLVVL. Over 36 to 158 the chain is Periplasmic; the sequence is NFAILPSLQQ…LTEIHQGDFS (123 aa). A polyP-periplasmic motif motif is present at residues 71–75; that stretch reads VVPPA. The helical transmembrane segment at 159–179 threads the bilayer; it reads PLFRYTLAIMLLAIGGAWLFI. One can recognise an HAMP domain in the interval 180-232; that stretch reads RIQNRPLVDLEHAALQVGKGIIPPPLREYGASEVRSVTRAFNHMAAGVKQLAD. Over 180 to 450 the chain is Cytoplasmic; the sequence is RIQNRPLVDL…TRAQGTTKEG (271 aa). The polyP-cytoplasmic motif motif lies at 201–205; that stretch reads IPPPL. The cytoplasmic dimerization domain (CDD), when dimerized forms osmosensitive core stretch occupies residues 223 to 289; that stretch reads MAAGVKQLAD…IIEQFIDYLR (67 aa). Positions 240-440 constitute a Histidine kinase domain; that stretch reads GVSHDLRTPL…SIRAWLPVPV (201 aa). ATP is bound by residues H243, 347–351, D373, 392–393, and 402–406; these read NAARY, RG, and TGLGL. H243 carries the phosphohistidine; by autocatalysis modification.

In terms of assembly, homodimer. Interacts with MzrA. Post-translationally, autophosphorylated. Incubation of isolated EnvZ C-terminal fragment (residues 180-450) with increasing levels of NaCl or sucrose increases its autophosphorylation.

It is found in the cell inner membrane. It catalyses the reaction ATP + protein L-histidine = ADP + protein N-phospho-L-histidine.. With respect to regulation, activity is modulated by MzrA. In the presence of 0.2 M NaCl, 2.0 mM sodium cholate (bile salts) decreases expression from the ompC promoter; how this is mediated is unknown. Autophosphorylation is inhibited by the angucycline antibiotic waldiomycin in a non-competitive manner; waldiomycin prevents dimerization of the cytoplasmic domain and autophosphorylation. Functionally, member of the two-component regulatory system EnvZ/OmpR involved in osmoregulation (particularly of genes ompF and ompC) as well as other genes. EnvZ functions as a membrane-associated protein kinase that phosphorylates OmpR in response to environmental signals; at low osmolarity OmpR activates ompF transcription, while at high osmolarity it represses ompF and activates ompC transcription. Also dephosphorylates OmpR in the presence of ATP. The cytoplasmic dimerization domain (CDD) forms an osmosensitive core; increasing osmolarity stabilizes this segment (possibly by its contraction), enhancing the autophosphorylation rate and consequently, downstream phosphotransfer to OmpR and signaling. Autophosphorylation is greater when full-length EnvZ is reconstituted in a lipid environment, lipid-mediated allostery impacts the kinase function of EnvZ. Involved in acid stress response; this requires EnvZ but not OmpR phosphorylation, and suggests that EnvZ senses cytoplasmic acidic pH. This is Sensor histidine kinase EnvZ (envZ) from Escherichia coli (strain K12).